The following is a 293-amino-acid chain: Ribosomal protein L11 methyltransferase (293 aa).

S-adenosyl-L-methionine is bound by residues T145, G166, D188, and N230.

It belongs to the methyltransferase superfamily. PrmA family.

The protein resides in the cytoplasm. The enzyme catalyses L-lysyl-[protein] + 3 S-adenosyl-L-methionine = N(6),N(6),N(6)-trimethyl-L-lysyl-[protein] + 3 S-adenosyl-L-homocysteine + 3 H(+). Its function is as follows. Methylates ribosomal protein L11. This Citrobacter koseri (strain ATCC BAA-895 / CDC 4225-83 / SGSC4696) protein is Ribosomal protein L11 methyltransferase.